A 125-amino-acid polypeptide reads, in one-letter code: Holo-[acyl-carrier-protein] synthase (125 aa).

Residues Asp-8 and Glu-55 each contribute to the Mg(2+) site.

Belongs to the P-Pant transferase superfamily. AcpS family. It depends on Mg(2+) as a cofactor.

Its subcellular location is the cytoplasm. The enzyme catalyses apo-[ACP] + CoA = holo-[ACP] + adenosine 3',5'-bisphosphate + H(+). Its function is as follows. Transfers the 4'-phosphopantetheine moiety from coenzyme A to a Ser of acyl-carrier-protein. This Treponema pallidum (strain Nichols) protein is Holo-[acyl-carrier-protein] synthase.